The primary structure comprises 158 residues: 6,7-dimethyl-8-ribityllumazine synthase (158 aa).

Residues F23, 61-63, and 85-87 contribute to the 5-amino-6-(D-ribitylamino)uracil site; these read SME and AVI. (2S)-2-hydroxy-3-oxobutyl phosphate is bound at residue 90-91; the sequence is DT. H93 acts as the Proton donor in catalysis. Residue Y118 coordinates 5-amino-6-(D-ribitylamino)uracil. R132 provides a ligand contact to (2S)-2-hydroxy-3-oxobutyl phosphate.

The protein belongs to the DMRL synthase family.

The catalysed reaction is (2S)-2-hydroxy-3-oxobutyl phosphate + 5-amino-6-(D-ribitylamino)uracil = 6,7-dimethyl-8-(1-D-ribityl)lumazine + phosphate + 2 H2O + H(+). Its pathway is cofactor biosynthesis; riboflavin biosynthesis; riboflavin from 2-hydroxy-3-oxobutyl phosphate and 5-amino-6-(D-ribitylamino)uracil: step 1/2. Catalyzes the formation of 6,7-dimethyl-8-ribityllumazine by condensation of 5-amino-6-(D-ribitylamino)uracil with 3,4-dihydroxy-2-butanone 4-phosphate. This is the penultimate step in the biosynthesis of riboflavin. The protein is 6,7-dimethyl-8-ribityllumazine synthase of Prochlorococcus marinus (strain MIT 9211).